A 788-amino-acid chain; its full sequence is Probable phosphoketolase 1 (788 aa).

It belongs to the XFP family. Thiamine diphosphate serves as cofactor.

In Lactiplantibacillus plantarum (strain ATCC BAA-793 / NCIMB 8826 / WCFS1) (Lactobacillus plantarum), this protein is Probable phosphoketolase 1.